A 137-amino-acid polypeptide reads, in one-letter code: Acidic phospholipase A2 PL-II (137 aa).

The signal sequence occupies residues 1–17 (AVCVSLLGASSIRPLPL). Cystine bridges form between Cys28–Cys89, Cys44–Cys136, Cys46–Cys62, Cys61–Cys117, Cys68–Cys110, Cys78–Cys103, and Cys96–Cys108. Ca(2+) contacts are provided by Tyr45, Gly47, and Gly49. His65 is an active-site residue. A Ca(2+)-binding site is contributed by Asp66. The active site involves Asp111.

Ca(2+) serves as cofactor. Expressed by the venom gland.

It is found in the secreted. The catalysed reaction is a 1,2-diacyl-sn-glycero-3-phosphocholine + H2O = a 1-acyl-sn-glycero-3-phosphocholine + a fatty acid + H(+). Functionally, snake venom phospholipase A2 (PLA2) that may act in the hemostasis system of the prey. Exhibits hydrolytic activities, and prefers the anionic micelles (dPPC with deoxycholate) (54 umol/mg/min) to the zwitterionic micelles (dPPC with Triton X-100) (15 umol/mg/min). PLA2 catalyzes the calcium-dependent hydrolysis of the 2-acyl groups in 3-sn-phosphoglycerides. This is Acidic phospholipase A2 PL-II from Walterinnesia aegyptia (Desert black snake).